The primary structure comprises 212 residues: N-(5'-phosphoribosyl)anthranilate isomerase (212 aa).

The protein belongs to the TrpF family.

The enzyme catalyses N-(5-phospho-beta-D-ribosyl)anthranilate = 1-(2-carboxyphenylamino)-1-deoxy-D-ribulose 5-phosphate. It functions in the pathway amino-acid biosynthesis; L-tryptophan biosynthesis; L-tryptophan from chorismate: step 3/5. This Microcystis aeruginosa (strain NIES-843 / IAM M-2473) protein is N-(5'-phosphoribosyl)anthranilate isomerase.